The sequence spans 100 residues: Co-chaperonin GroES (100 aa).

The protein belongs to the GroES chaperonin family. Heptamer of 7 subunits arranged in a ring. Interacts with the chaperonin GroEL.

It localises to the cytoplasm. Its function is as follows. Together with the chaperonin GroEL, plays an essential role in assisting protein folding. The GroEL-GroES system forms a nano-cage that allows encapsulation of the non-native substrate proteins and provides a physical environment optimized to promote and accelerate protein folding. GroES binds to the apical surface of the GroEL ring, thereby capping the opening of the GroEL channel. This chain is Co-chaperonin GroES, found in Rhodothermus marinus (Rhodothermus obamensis).